The following is a 172-amino-acid chain: Chalcone--flavanone isomerase 1 (172 aa).

Substrate contacts are provided by Thr-2, Asn-67, and Thr-144.

This sequence belongs to the chalcone isomerase family.

The enzyme catalyses a chalcone = a flavanone.. It participates in secondary metabolite biosynthesis; flavonoid biosynthesis. Catalyzes the intramolecular cyclization of bicyclic chalcones into tricyclic (S)-flavanones. Responsible for the isomerization of 4,2',4',6'-tetrahydroxychalcone (also termed chalcone) into naringenin. This Glycine max (Soybean) protein is Chalcone--flavanone isomerase 1 (CHI1).